A 925-amino-acid chain; its full sequence is Translation initiation factor IF-2 (925 aa).

2 disordered regions span residues 52-84 (GGGK…VKAP) and 98-326 (AGGN…GVRL). Low complexity predominate over residues 57–68 (AEGAAKAPAKAA). Residues 69 to 84 (AKGDAKTAAKGDVKAP) show a composition bias toward basic and acidic residues. Positions 98-138 (AGGNGEAAAPPAQPGGTATTPAAQATPEAPARPGPAAARPS) are enriched in low complexity. 2 stretches are compositionally biased toward pro residues: residues 139–169 (APAP…PAPK) and 193–207 (PRPV…PGAP). Residues 236 to 296 (RPGGGRPGGP…GAAGAFGRPG (61 aa)) are compositionally biased toward gly residues. Basic residues predominate over residues 300–309 (RRGRKSKRQK). A tr-type G domain is found at 421-592 (TRPPVVTVMG…AVLLTADAAL (172 aa)). The G1 stretch occupies residues 430 to 437 (GHVDHGKT). 430–437 (GHVDHGKT) provides a ligand contact to GTP. The segment at 455-459 (GITQH) is G2. The interval 480 to 483 (DTPG) is G3. Residues 480–484 (DTPGH) and 534–537 (NKID) contribute to the GTP site. The segment at 534–537 (NKID) is G4. Positions 570-572 (SAK) are G5.

It belongs to the TRAFAC class translation factor GTPase superfamily. Classic translation factor GTPase family. IF-2 subfamily.

The protein localises to the cytoplasm. Functionally, one of the essential components for the initiation of protein synthesis. Protects formylmethionyl-tRNA from spontaneous hydrolysis and promotes its binding to the 30S ribosomal subunits. Also involved in the hydrolysis of GTP during the formation of the 70S ribosomal complex. This chain is Translation initiation factor IF-2, found in Mycolicibacterium paratuberculosis (strain ATCC BAA-968 / K-10) (Mycobacterium paratuberculosis).